The primary structure comprises 142 residues: Transcriptional regulator MraZ (142 aa).

SpoVT-AbrB domains lie at 5–47 (NYQH…TNQE) and 76–119 (SLTV…DINA).

This sequence belongs to the MraZ family. As to quaternary structure, forms oligomers.

It is found in the cytoplasm. Its subcellular location is the nucleoid. This Mycoplasmoides gallisepticum (strain R(low / passage 15 / clone 2)) (Mycoplasma gallisepticum) protein is Transcriptional regulator MraZ.